A 433-amino-acid polypeptide reads, in one-letter code: Trigger factor (433 aa).

The region spanning 161–246 (EDRVVIDFVG…LKKVENIVLP (86 aa)) is the PPIase FKBP-type domain.

The protein belongs to the FKBP-type PPIase family. Tig subfamily.

The protein localises to the cytoplasm. It carries out the reaction [protein]-peptidylproline (omega=180) = [protein]-peptidylproline (omega=0). Functionally, involved in protein export. Acts as a chaperone by maintaining the newly synthesized protein in an open conformation. Functions as a peptidyl-prolyl cis-trans isomerase. This chain is Trigger factor, found in Actinobacillus pleuropneumoniae serotype 5b (strain L20).